Here is a 133-residue protein sequence, read N- to C-terminus: Agouti-signaling protein (133 aa).

A signal peptide spans 1 to 22 (MDVSRLLLATLLVCLCFLTAYS). Asn-39 carries an N-linked (GlcNAc...) asparagine glycan. The segment at 56–95 (NKKSKKISRNEAEKKKRPSKRKAPMKNVARTRPPPPTPCV) is disordered. Basic residues predominate over residues 70 to 79 (KKRPSKRKAP). 5 disulfide bridges follow: Cys-94–Cys-109, Cys-101–Cys-115, Cys-108–Cys-126, Cys-112–Cys-133, and Cys-117–Cys-124. Residues 94-133 (CVATRDSCKPPAPACCDPCAFCQCRFFRSACSCRVLNPTC) form the Agouti domain.

The protein resides in the secreted. In terms of biological role, involved in the regulation of melanogenesis. The binding of ASP to MC1R precludes alpha-MSH initiated signaling and thus blocks production of cAMP, leading to a down-regulation of eumelanogenesis (brown/black pigment) and thus increasing synthesis of pheomelanin (yellow/red pigment). The sequence is that of Agouti-signaling protein (ASIP) from Bos taurus (Bovine).